A 426-amino-acid chain; its full sequence is Phosphomethylpyrimidine synthase (426 aa).

Residues Asn-65, Met-94, Tyr-123, His-162, 184–186 (SRG), 225–228 (DGMR), and Glu-264 each bind substrate. Residue His-268 participates in Zn(2+) binding. Tyr-291 serves as a coordination point for substrate. His-332 lines the Zn(2+) pocket. Positions 408, 411, and 415 each coordinate [4Fe-4S] cluster.

It belongs to the ThiC family. [4Fe-4S] cluster is required as a cofactor.

The enzyme catalyses 5-amino-1-(5-phospho-beta-D-ribosyl)imidazole + S-adenosyl-L-methionine = 4-amino-2-methyl-5-(phosphooxymethyl)pyrimidine + CO + 5'-deoxyadenosine + formate + L-methionine + 3 H(+). It participates in cofactor biosynthesis; thiamine diphosphate biosynthesis. Catalyzes the synthesis of the hydroxymethylpyrimidine phosphate (HMP-P) moiety of thiamine from aminoimidazole ribotide (AIR) in a radical S-adenosyl-L-methionine (SAM)-dependent reaction. The sequence is that of Phosphomethylpyrimidine synthase from Methanococcus maripaludis (strain DSM 14266 / JCM 13030 / NBRC 101832 / S2 / LL).